Here is a 137-residue protein sequence, read N- to C-terminus: Large ribosomal subunit protein uL16 (137 aa).

This sequence belongs to the universal ribosomal protein uL16 family. In terms of assembly, part of the 50S ribosomal subunit.

Binds 23S rRNA and is also seen to make contacts with the A and possibly P site tRNAs. The protein is Large ribosomal subunit protein uL16 of Rhodopseudomonas palustris (strain BisB5).